The following is a 130-amino-acid chain: DNA-binding protein HU (130 aa).

It belongs to the bacterial histone-like protein family.

In terms of biological role, histone-like DNA-binding protein which is capable of wrapping DNA to stabilize it, and thus to prevent its denaturation under extreme environmental conditions. The polypeptide is DNA-binding protein HU (hup) (Ureaplasma parvum serovar 3 (strain ATCC 700970)).